A 215-amino-acid chain; its full sequence is Formate dehydrogenase subunit beta (215 aa).

In terms of domain architecture, 4Fe-4S ferredoxin-type 1 spans 3–32; sequence KGFFVDTTRCTACRGCQVACKQWHGNPATP. Residues C12, C15, C18, C22, C73, C76, C81, C121, C138, C141, C153, and C157 each coordinate [4Fe-4S] cluster. A 4Fe-4S ferredoxin-type 2 domain is found at 129–168; it reads VAESNQMAKCDMCIDRITNGLRPACVTSCPTGAMNFGDLS.

As to quaternary structure, heterodimer of alpha (FdhA) and beta (FdhB) subunits. It depends on [4Fe-4S] cluster as a cofactor.

The protein resides in the periplasm. Its function is as follows. Beta chain of the formate dehydrogenase (FDH) catalyzes the reversible two-electron oxidation of formate to carbon dioxide. FDH loses activity in the presence of air, but this activity can be restored. This chain is an electron transfer unit. This is Formate dehydrogenase subunit beta from Megalodesulfovibrio gigas (strain ATCC 19364 / DSM 1382 / NCIMB 9332 / VKM B-1759) (Desulfovibrio gigas).